A 188-amino-acid chain; its full sequence is Elongation factor P (188 aa).

It belongs to the elongation factor P family.

It is found in the cytoplasm. Its pathway is protein biosynthesis; polypeptide chain elongation. Functionally, involved in peptide bond synthesis. Stimulates efficient translation and peptide-bond synthesis on native or reconstituted 70S ribosomes in vitro. Probably functions indirectly by altering the affinity of the ribosome for aminoacyl-tRNA, thus increasing their reactivity as acceptors for peptidyl transferase. The chain is Elongation factor P from Rickettsia canadensis (strain McKiel).